The sequence spans 218 residues: Ribosomal RNA small subunit methyltransferase G (218 aa).

S-adenosyl-L-methionine is bound by residues G82, L87, 133 to 134 (VE), and R147.

This sequence belongs to the methyltransferase superfamily. RNA methyltransferase RsmG family.

The protein resides in the cytoplasm. The catalysed reaction is guanosine(527) in 16S rRNA + S-adenosyl-L-methionine = N(7)-methylguanosine(527) in 16S rRNA + S-adenosyl-L-homocysteine. Specifically methylates the N7 position of guanine in position 527 of 16S rRNA. The sequence is that of Ribosomal RNA small subunit methyltransferase G from Leptothrix cholodnii (strain ATCC 51168 / LMG 8142 / SP-6) (Leptothrix discophora (strain SP-6)).